We begin with the raw amino-acid sequence, 217 residues long: Ras-related protein RGP2 (217 aa).

Residues 19–26 (GDSGVGKS), 67–71 (DTAGQ), and 125–128 (NKSD) each bind GTP. Residues Cys-214 and Cys-215 are each lipidated (S-geranylgeranyl cysteine).

It belongs to the small GTPase superfamily. Rab family.

It localises to the cell membrane. This Oryza sativa subsp. japonica (Rice) protein is Ras-related protein RGP2 (RGP2).